A 227-amino-acid polypeptide reads, in one-letter code: 4-nitrobenzoate reductase (227 aa).

15 to 19 (RRAVR) serves as a coordination point for FMN. S45, Y102, and I107 together coordinate NAD(+). R213 provides a ligand contact to FMN.

It belongs to the nitroreductase family. FMN serves as cofactor.

It catalyses the reaction 4-nitrobenzoate + 2 NADH + 2 H(+) = 4-hydroxylaminobenzoate + 2 NAD(+) + H2O. In terms of biological role, nitroreductase involved in the degradation of nitroaromatic compounds. Catalyzes the conversion of 4-nitrobenzoate to 4-hydroxylaminobenzoate. Required for the catabolism of 4-nitrotoluene. In Pseudomonas putida (Arthrobacter siderocapsulatus), this protein is 4-nitrobenzoate reductase.